The following is a 246-amino-acid chain: Uridylate kinase (246 aa).

16–19 (KLGG) contributes to the ATP binding site. G57 is a UMP binding site. The ATP site is built by G58 and R62. UMP contacts are provided by residues D77 and 138–145 (MGMPYFST). ATP-binding residues include Y171 and D174.

The protein belongs to the UMP kinase family. Homohexamer.

The protein resides in the cytoplasm. It carries out the reaction UMP + ATP = UDP + ADP. It participates in pyrimidine metabolism; CTP biosynthesis via de novo pathway; UDP from UMP (UMPK route): step 1/1. With respect to regulation, inhibited by UTP. Its function is as follows. Catalyzes the reversible phosphorylation of UMP to UDP. This Corynebacterium jeikeium (strain K411) protein is Uridylate kinase.